Consider the following 267-residue polypeptide: Small ribosomal subunit protein eS4 (267 aa).

The region spanning 42–104 is the S4 RNA-binding domain; sequence LPLILVLRNR…TKENFRLLFD (63 aa).

It belongs to the eukaryotic ribosomal protein eS4 family.

The protein localises to the cytoplasm. The protein is Small ribosomal subunit protein eS4 (rps4) of Dictyostelium discoideum (Social amoeba).